The following is a 519-amino-acid chain: Cysteine--tRNA ligase (519 aa).

Cys-30 provides a ligand contact to Zn(2+). A 'HIGH' region motif is present at residues 32 to 42 (PTVYDRAHLGN). Cys-221, His-253, and Glu-257 together coordinate Zn(2+). Residues 286 to 290 (KMSKS) carry the 'KMSKS' region motif. Lys-289 lines the ATP pocket.

This sequence belongs to the class-I aminoacyl-tRNA synthetase family. In terms of assembly, monomer. Zn(2+) is required as a cofactor.

It is found in the cytoplasm. It catalyses the reaction tRNA(Cys) + L-cysteine + ATP = L-cysteinyl-tRNA(Cys) + AMP + diphosphate. The chain is Cysteine--tRNA ligase from Cereibacter sphaeroides (strain KD131 / KCTC 12085) (Rhodobacter sphaeroides).